The following is a 530-amino-acid chain: Cytochrome P450 monooxygenase aneG (530 aa).

A glycan (N-linked (GlcNAc...) asparagine) is linked at Asn-2. The helical transmembrane segment at 43 to 63 (WLSILGFTIGCYYVIYTFYAL) threads the bilayer. Asn-92 carries N-linked (GlcNAc...) asparagine glycosylation. Residue Cys-474 coordinates heme.

Belongs to the cytochrome P450 family. The cofactor is heme.

It localises to the membrane. It catalyses the reaction asperaculane E + reduced [NADPH--hemoprotein reductase] + O2 = asperaculane G + oxidized [NADPH--hemoprotein reductase] + H2O + H(+). The enzyme catalyses asperaculane G + reduced [NADPH--hemoprotein reductase] + O2 = aculene D + oxidized [NADPH--hemoprotein reductase] + CO2 + 2 H2O. The catalysed reaction is asperaculane E + 2 reduced [NADPH--hemoprotein reductase] + 2 O2 = aculene D + 2 oxidized [NADPH--hemoprotein reductase] + CO2 + 3 H2O + H(+). It participates in secondary metabolite biosynthesis. In terms of biological role, cytochrome P450 monooxygenase; part of the gene cluster that mediates the biosynthesis of aculenes, a unique type of norsesquiterpenes that contain a nordaucane skeleton linked to an L-proline moiety and are of mixed biosynthetic origin. The pathway begins with the synthesis of dauca-4,7-diene by the terpene cyclase aneC using farnesyl pyrophosphate (FPP) as substrate. The cytochrome P450 monooxygenase aneF then performs the initial oxidation at C-12 of dauca-4,7-diene to yield asperaculane D. Asperaculane D is substrate of the cytochrome P450 monooxygenase aneD for C-10 hydroxylation to yield asperaculane E. The cytochrome P450 monooxygenase aneG then converts asperaculane E into aculene D via C-2 oxidation. The monomodular nonribosomal peptide synthtase aneB adenylates L-proline and the thiohydrolase aneE transfers this activated L-proline derivative to aculenes D and C to produce respectively aculenes B and A. The dioxygenase aneA converts aculene D into aculene C, and aculene B into aculene A by introducing the 5,6-alkene moiety. Asperculanes A, B, C and F, as well as 14-prolyl asperculane C, might be shunt products of the pathway. This chain is Cytochrome P450 monooxygenase aneG, found in Aspergillus aculeatus (strain ATCC 16872 / CBS 172.66 / WB 5094).